The sequence spans 45 residues: MTKRTFQPNNRRRARKHGFRARMRTRAGRAILSARRGKNRAELSA.

The segment at 1 to 45 is disordered; that stretch reads MTKRTFQPNNRRRARKHGFRARMRTRAGRAILSARRGKNRAELSA. Over residues 10-27 the composition is skewed to basic residues; it reads NRRRARKHGFRARMRTRA.

This sequence belongs to the bacterial ribosomal protein bL34 family.

This is Large ribosomal subunit protein bL34 from Micrococcus luteus (strain ATCC 4698 / DSM 20030 / JCM 1464 / CCM 169 / CCUG 5858 / IAM 1056 / NBRC 3333 / NCIMB 9278 / NCTC 2665 / VKM Ac-2230) (Micrococcus lysodeikticus).